Reading from the N-terminus, the 451-residue chain is uncharacterized protein (451 aa).

The first 18 residues, 1–18 (MRTRITLALAVLLLLLAG), serve as a signal peptide directing secretion. Cysteine 19 carries N-palmitoyl cysteine lipidation. A lipid anchor (S-diacylglycerol cysteine) is attached at cysteine 19. Residues 424–451 (TSADPPPGVPRAGKRNIRDATSRLPSTP) are disordered.

The protein localises to the cell membrane. Functionally, may participate in oleandomycin glycosylation and secretion during antibiotic production. This is an uncharacterized protein from Streptomyces antibioticus.